Here is a 39-residue protein sequence, read N- to C-terminus: MTRTAVLLLTLLFLVAMAASDKIKTREVCWTEEECENWE.

The signal sequence occupies residues 1-20 (MTRTAVLLLTLLFLVAMAAS). A disulfide bridge links Cys-29 with Cys-35.

As to expression, expressed by the venom duct.

It is found in the secreted. Probable neurotoxin. In Californiconus californicus (California cone), this protein is Contryphan-Cal1.